We begin with the raw amino-acid sequence, 477 residues long: Ubiquitin carboxyl-terminal hydrolase 7 (477 aa).

The Ubiquitin-like domain maps to 2–77 (LTVSVKWQKK…LMMMGTADEI (76 aa)). The 370-residue stretch at 104–473 (AGLVNLGNTC…MAYIVMYKAR (370 aa)) folds into the USP domain. The active-site Nucleophile is the Cys-113. The calmodulin-binding stretch occupies residues 171-190 (MPFWMVLQKKYPQFAQLHNG). The tract at residues 364-401 (QASAKSSSKGDDVKMTDAEGSSNQSGESSTGDQQEGAS) is disordered. A compositionally biased stretch (basic and acidic residues) spans 371–380 (SKGDDVKMTD). A compositionally biased stretch (polar residues) spans 382 to 399 (EGSSNQSGESSTGDQQEG). The active-site Proton acceptor is the His-425.

It belongs to the peptidase C19 family. Interacts with calmodulin (CaM).

The catalysed reaction is Thiol-dependent hydrolysis of ester, thioester, amide, peptide and isopeptide bonds formed by the C-terminal Gly of ubiquitin (a 76-residue protein attached to proteins as an intracellular targeting signal).. In terms of biological role, recognizes and hydrolyzes the peptide bond at the C-terminal Gly of ubiquitin. Involved in the processing of poly-ubiquitin precursors as well as that of ubiquitinated proteins. The chain is Ubiquitin carboxyl-terminal hydrolase 7 (UBP7) from Arabidopsis thaliana (Mouse-ear cress).